Here is a 339-residue protein sequence, read N- to C-terminus: WAT1-related protein At5g40210 (339 aa).

10 helical membrane-spanning segments follow: residues 11–31, 42–62, 74–94, 104–124, 140–160, 168–188, 200–220, 233–253, 266–286, and 289–309; these read GWILTAMVVTEFSNVGVNTLV, FVVLVYSYTFGSLLLLPLTFF, FSILCNMGILGLIASAFQILG, TLSSAMSNVNPAFTFILAVVF, VLGTILSIIGALVVTLYHGPM, WIIGGGLLALQYILVSVSYLV, VVVTLVHNVCIAVVCAFVSLL, FDITLITVVATGILNSGYYVI, LSMFKPLSILIAAVSTFIFLG, and LYLGSVMGGILISIGFYMVLW. In terms of domain architecture, EamA spans 29 to 154; that stretch reads TLVKAATSKG…LSIIGALVVT (126 aa).

The protein belongs to the drug/metabolite transporter (DMT) superfamily. Plant drug/metabolite exporter (P-DME) (TC 2.A.7.4) family.

Its subcellular location is the membrane. This chain is WAT1-related protein At5g40210, found in Arabidopsis thaliana (Mouse-ear cress).